A 313-amino-acid chain; its full sequence is Olfactory receptor 4M2 (313 aa).

The Cytoplasmic portion of the chain corresponds to 1-25 (METANYTKVTEFVLTGLSQTPEVQL). Residues 26–46 (VLFVIFLSFYLFILPGNILII) form a helical membrane-spanning segment. The Extracellular portion of the chain corresponds to 47 to 57 (CTISLDPHLTS). A helical membrane pass occupies residues 58–78 (PMYFLLANLAFLDIWYSSITA). Residues 79–97 (PEMLIDFFVERKIISFDEC) are Cytoplasmic-facing. A disulfide bond links C97 and C179. The chain crosses the membrane as a helical span at residues 98-118 (IAQLFFLHFAGASEMFLLTVM). At 119–142 (AFDLYTAICRPLHYATIMNQRLCC) the chain is on the extracellular side. The helical transmembrane segment at 143-163 (ILVALSWRGGFIHSIIQVALI) threads the bilayer. The Cytoplasmic portion of the chain corresponds to 164-204 (VRLPFCGPNELDSYFCDITQVVRIACANTFPEELVMICSSG). Residues 205–225 (LISVVCLIALLMSYAFLLALL) form a helical membrane-spanning segment. Residues 226–238 (KKLSGSGENTNRA) are Extracellular-facing. The helical transmembrane segment at 239–259 (VSTCYSHITIVVLMFGPSIYI) threads the bilayer. At 260 to 270 (YARPFDSFSLD) the chain is on the cytoplasmic side. Residues 271-291 (KVVSVFNTLIFPLHNPIIYTL) traverse the membrane as a helical segment. The Extracellular segment spans residues 292-313 (RNKEVKAAMRKLVTKYILCKEK).

Belongs to the G-protein coupled receptor 1 family.

It is found in the membrane. In terms of biological role, odorant receptor. The polypeptide is Olfactory receptor 4M2 (Homo sapiens (Human)).